A 135-amino-acid chain; its full sequence is Large ribosomal subunit protein uL16c (135 aa).

The span at 1 to 17 (MLSPKRTRFRKQHRGRM) shows a compositional bias: basic residues. Residues 1–20 (MLSPKRTRFRKQHRGRMKGT) are disordered.

It belongs to the universal ribosomal protein uL16 family. As to quaternary structure, part of the 50S ribosomal subunit.

Its subcellular location is the plastid. The protein resides in the chloroplast. The chain is Large ribosomal subunit protein uL16c from Lemna minor (Common duckweed).